A 201-amino-acid polypeptide reads, in one-letter code: Large ribosomal subunit protein bL25 (201 aa).

It belongs to the bacterial ribosomal protein bL25 family. CTC subfamily. As to quaternary structure, part of the 50S ribosomal subunit; part of the 5S rRNA/L5/L18/L25 subcomplex. Contacts the 5S rRNA. Binds to the 5S rRNA independently of L5 and L18.

This is one of the proteins that binds to the 5S RNA in the ribosome where it forms part of the central protuberance. In Akkermansia muciniphila (strain ATCC BAA-835 / DSM 22959 / JCM 33894 / BCRC 81048 / CCUG 64013 / CIP 107961 / Muc), this protein is Large ribosomal subunit protein bL25.